The primary structure comprises 312 residues: Short-chain dehydrogenase/reductase pkfC (312 aa).

NADP(+) is bound by residues lysine 56, asparagine 108, and lysine 140. The active-site Proton donor is the serine 164. NADP(+) is bound by residues tyrosine 193 and lysine 197. The active-site Proton acceptor is the tyrosine 193. Lysine 197 functions as the Lowers pKa of active site Tyr in the catalytic mechanism.

This sequence belongs to the short-chain dehydrogenases/reductases (SDR) family.

It participates in secondary metabolite biosynthesis. Short-chain dehydrogenase/reductase; part of the gene cluster that mediates the biosynthesis of aspernidine A, a prenylated isoindolinone. The starting point of the biosynthesis of aspernidin A is the production of orsellinaldehyde by the non-reducing polyketide synthase pkfA. Hydroxylation, methylation of one of the phenol groups, and prenylation, presumably catalyzed by the prenyltransferase pkfE, would be needed to yield aspernidine D. Subsequently, the cytochrome P450 monooxygenase pkfB is responsible for hydroxylation of aspernidine D to yield aspernidine E. The dehydrogenase pkfF may be responsible for further oxidation of aspernidine E to form a dialdehyde intermediate which is further transformed in a series of steps, some of which are enzyme-mediated, to generate aspernidine A. The possibility that additional enzymes outside of the cluster are involved in aspernidine A biosynthesis cannot be excluded. This Emericella nidulans (strain FGSC A4 / ATCC 38163 / CBS 112.46 / NRRL 194 / M139) (Aspergillus nidulans) protein is Short-chain dehydrogenase/reductase pkfC.